The sequence spans 356 residues: ATP-dependent 6-phosphofructokinase (356 aa).

Residues glycine 15, 78–79, and 115–118 contribute to the ATP site; these read KG and GEGT. Glutamate 116 is a Mg(2+) binding site. Substrate is bound by residues 138–140, arginine 175, 182–184, glutamate 235, arginine 272, and 278–281; these read TID, MGR, and HLQR. The active-site Proton acceptor is aspartate 140.

This sequence belongs to the phosphofructokinase type A (PFKA) family. Mixed-substrate PFK group III subfamily. In terms of assembly, homodimer or homotetramer. The cofactor is Mg(2+).

It is found in the cytoplasm. The catalysed reaction is beta-D-fructose 6-phosphate + ATP = beta-D-fructose 1,6-bisphosphate + ADP + H(+). It functions in the pathway carbohydrate degradation; glycolysis; D-glyceraldehyde 3-phosphate and glycerone phosphate from D-glucose: step 3/4. Its function is as follows. Catalyzes the phosphorylation of D-fructose 6-phosphate to fructose 1,6-bisphosphate by ATP, the first committing step of glycolysis. The sequence is that of ATP-dependent 6-phosphofructokinase from Chloroflexus aurantiacus (strain ATCC 29366 / DSM 635 / J-10-fl).